The following is a 480-amino-acid chain: Membrane-bound lytic murein transglycosylase F (480 aa).

The signal sequence occupies residues 1–15 (MNRILLTLLTLTLLA). Residues 16-259 (GCQRVAVEET…HLDEKYFAHV (244 aa)) form a non-LT domain region. The interval 260-480 (KRFDYVDTRA…EKAITGAQPE (221 aa)) is LT domain. Glu-304 is a catalytic residue.

The protein in the N-terminal section; belongs to the bacterial solute-binding protein 3 family. In the C-terminal section; belongs to the transglycosylase Slt family.

Its subcellular location is the cell outer membrane. The catalysed reaction is Exolytic cleavage of the (1-&gt;4)-beta-glycosidic linkage between N-acetylmuramic acid (MurNAc) and N-acetylglucosamine (GlcNAc) residues in peptidoglycan, from either the reducing or the non-reducing ends of the peptidoglycan chains, with concomitant formation of a 1,6-anhydrobond in the MurNAc residue.. In terms of biological role, murein-degrading enzyme that degrades murein glycan strands and insoluble, high-molecular weight murein sacculi, with the concomitant formation of a 1,6-anhydromuramoyl product. Lytic transglycosylases (LTs) play an integral role in the metabolism of the peptidoglycan (PG) sacculus. Their lytic action creates space within the PG sacculus to allow for its expansion as well as for the insertion of various structures such as secretion systems and flagella. This chain is Membrane-bound lytic murein transglycosylase F, found in Shewanella woodyi (strain ATCC 51908 / MS32).